Reading from the N-terminus, the 32-residue chain is Variegin (32 aa).

The disordered stretch occupies residues 1–32; sequence SDQGDVAEPKMHKTAPPFDFEAIPEEYLDDES. Residues 8 to 14 form a contains the active site region; that stretch reads EPKMHKT. O-linked (Hex) threonine glycosylation occurs at T14. A compositionally biased stretch (acidic residues) spans 22–32; it reads AIPEEYLDDES.

As to quaternary structure, interacts with human F2 (thrombin); the interaction results in thrombin inhibition.

It localises to the secreted. Functionally, thrombin inhibitor. Does not inhibit other serine proteases. This Amblyomma variegatum (Tropical bont tick) protein is Variegin.